Consider the following 688-residue polypeptide: UvrABC system protein B (688 aa).

The region spanning 41–429 (ANFEAGLAKQ…AGEVTELVVR (389 aa)) is the Helicase ATP-binding domain. 54–61 (GVTGSGKT) is a binding site for ATP. The Beta-hairpin motif lies at 107-130 (YYDYYQPEAYVPSSDTFIEKDSSI). The Helicase C-terminal domain occupies 446–612 (QVDDLMSEIH…SVERPISDIM (167 aa)). The tract at residues 616 to 646 (REDAAEKKSGKGRSKSRQVAEETPDYRAMKP) is disordered. The span at 633-645 (QVAEETPDYRAMK) shows a compositional bias: basic and acidic residues. Residues 650-685 (AGKLKSLEQKMYQHAKDLEFEAAAQIRDQIQKLKTA) enclose the UVR domain.

Belongs to the UvrB family. Forms a heterotetramer with UvrA during the search for lesions. Interacts with UvrC in an incision complex.

Its subcellular location is the cytoplasm. Functionally, the UvrABC repair system catalyzes the recognition and processing of DNA lesions. A damage recognition complex composed of 2 UvrA and 2 UvrB subunits scans DNA for abnormalities. Upon binding of the UvrA(2)B(2) complex to a putative damaged site, the DNA wraps around one UvrB monomer. DNA wrap is dependent on ATP binding by UvrB and probably causes local melting of the DNA helix, facilitating insertion of UvrB beta-hairpin between the DNA strands. Then UvrB probes one DNA strand for the presence of a lesion. If a lesion is found the UvrA subunits dissociate and the UvrB-DNA preincision complex is formed. This complex is subsequently bound by UvrC and the second UvrB is released. If no lesion is found, the DNA wraps around the other UvrB subunit that will check the other stand for damage. The protein is UvrABC system protein B of Xanthomonas oryzae pv. oryzae (strain KACC10331 / KXO85).